Here is a 1150-residue protein sequence, read N- to C-terminus: Rho-type GTPase-activating protein 1 (1150 aa).

A compositionally biased stretch (basic and acidic residues) spans methionine 1–glycine 10. Residues methionine 1–glutamine 78 form a disordered region. Positions threonine 40–leucine 62 are enriched in polar residues. LIM zinc-binding domains lie at lysine 114 to aspartate 177, leucine 178 to alanine 238, and aspartate 483 to valine 546. Residues serine 586–serine 683 form a disordered region. Residues glutamate 598–aspartate 617 show a composition bias toward polar residues. A compositionally biased stretch (low complexity) spans serine 642–serine 655. At serine 690 the chain carries Phosphoserine. Residues alanine 726–lysine 759 form a disordered region. In terms of domain architecture, Rho-GAP spans valine 837–cysteine 1038. Disordered regions lie at residues leucine 1078 to isoleucine 1097 and leucine 1104 to serine 1150. Basic residues predominate over residues alanine 1088–isoleucine 1097. A compositionally biased stretch (polar residues) spans leucine 1104 to alanine 1134.

It localises to the cell tip. Its subcellular location is the nucleus. Functionally, GTPase-activating protein for Rho1. Involved in the F-actin patch localization, cell morphogenesis, regulation of septation, and cell wall synthesis. This is Rho-type GTPase-activating protein 1 (rga1) from Schizosaccharomyces pombe (strain 972 / ATCC 24843) (Fission yeast).